The primary structure comprises 163 residues: Epithelial membrane protein 3 (163 aa).

A helical membrane pass occupies residues 4–24 (LLLVVSALHILILILLFVATL). N-linked (GlcNAc...) asparagine glycans are attached at residues Asn-47 and Asn-56. 3 consecutive transmembrane segments (helical) span residues 66–86 (VQVL…LFMF), 100–120 (TGLC…IYAI), and 139–159 (FALA…YIHL).

This sequence belongs to the PMP-22/EMP/MP20 family.

Its subcellular location is the membrane. In terms of biological role, probably involved in cell proliferation and cell-cell interactions. The polypeptide is Epithelial membrane protein 3 (EMP3) (Homo sapiens (Human)).